Here is a 429-residue protein sequence, read N- to C-terminus: Glutamyl-tRNA reductase (429 aa).

Substrate is bound by residues 56-59 (TCNR), Ser-119, 124-126 (EPQ), and Gln-130. Cys-57 functions as the Nucleophile in the catalytic mechanism. 199-204 (GAGEMI) contacts NADP(+).

The protein belongs to the glutamyl-tRNA reductase family. Homodimer.

The enzyme catalyses (S)-4-amino-5-oxopentanoate + tRNA(Glu) + NADP(+) = L-glutamyl-tRNA(Glu) + NADPH + H(+). The protein operates within porphyrin-containing compound metabolism; protoporphyrin-IX biosynthesis; 5-aminolevulinate from L-glutamyl-tRNA(Glu): step 1/2. Its function is as follows. Catalyzes the NADPH-dependent reduction of glutamyl-tRNA(Glu) to glutamate 1-semialdehyde (GSA). The polypeptide is Glutamyl-tRNA reductase (Janthinobacterium sp. (strain Marseille) (Minibacterium massiliensis)).